The following is a 235-amino-acid chain: Large ribosomal subunit protein uL1 (235 aa).

This sequence belongs to the universal ribosomal protein uL1 family. In terms of assembly, part of the 50S ribosomal subunit.

Functionally, binds directly to 23S rRNA. The L1 stalk is quite mobile in the ribosome, and is involved in E site tRNA release. In terms of biological role, protein L1 is also a translational repressor protein, it controls the translation of the L11 operon by binding to its mRNA. The protein is Large ribosomal subunit protein uL1 of Micrococcus luteus (strain ATCC 4698 / DSM 20030 / JCM 1464 / CCM 169 / CCUG 5858 / IAM 1056 / NBRC 3333 / NCIMB 9278 / NCTC 2665 / VKM Ac-2230) (Micrococcus lysodeikticus).